The following is a 459-amino-acid chain: MAP kinase-interacting serine/threonine-protein kinase 2 (459 aa).

Positions 28-67 (LDPAQHGDSDFSPQCEARPDMPSSQPIDIPDAKKRGRKKK) are disordered. Positions 60–66 (KKRGRKK) match the Nuclear localization signal motif. Serine 74 is modified (phosphoserine). Residues 84 to 368 (QLQEDVLGEG…AAQVLQHPWV (285 aa)) form the Protein kinase domain. Residues 90 to 98 (LGEGAHARV) and lysine 113 each bind ATP. Residue 160–162 (EKM) participates in staurosporine binding. Residue aspartate 205 is the Proton acceptor of the active site. Glutamate 209 serves as a coordination point for staurosporine. Phosphothreonine is present on residues threonine 244 and threonine 249. Zn(2+)-binding residues include cysteine 299, cysteine 311, and cysteine 314. The residue at position 379 (threonine 379) is a Phosphothreonine. 2 positions are modified to phosphoserine: serine 431 and serine 434. Residues 438–442 (LAQRR) carry the MAP kinase binding motif. Phosphoserine is present on serine 446. Phosphothreonine is present on threonine 450.

This sequence belongs to the protein kinase superfamily. CAMK Ser/Thr protein kinase family. In terms of assembly, monomer. Interacts with the C-terminal regions of EIF4G1 and EIF4G2; this interaction is promoted when MAPK pathways are repressed but repressed upon ERK proteins activation. Also binds to dephosphorylated MAPK3/ERK1 and MAPK1/ER2K. Interaction with phosphorylated MAPK3/ERK1 and MAPK1/ER2K protects it from dephosphorylation and inactivation. Interacts with ESR2 and EIF4E in the nucleus. Mg(2+) serves as cofactor. Requires Zn(2+) as cofactor. In terms of processing, dual phosphorylation of Thr-244 and Thr-249 activates the kinase. Phosphorylation of Thr-379 activates the kinase. Phosphorylated upon arsenic trioxide As(2)O(3) treatment. Phosphorylated by MAPK1/ERK2, MAPK11 and MAPK14. Dephosphorylated by PP2A.

Its subcellular location is the cytoplasm. The protein localises to the nucleus. It localises to the PML body. The catalysed reaction is L-seryl-[protein] + ATP = O-phospho-L-seryl-[protein] + ADP + H(+). It carries out the reaction L-threonyl-[protein] + ATP = O-phospho-L-threonyl-[protein] + ADP + H(+). Inhibited by CGP57380 and staurosporine. Serine/threonine-protein kinase that phosphorylates SFPQ/PSF, HNRNPA1 and EIF4E. May play a role in the response to environmental stress and cytokines. Appears to regulate translation by phosphorylating EIF4E, thus increasing the affinity of this protein for the 7-methylguanosine-containing mRNA cap. Required for mediating PP2A-inhibition-induced EIF4E phosphorylation. Triggers EIF4E shuttling from cytoplasm to nucleus. Enhances the formation of EIF4F complex in pachytene spermatocytes, thus promoting mRNA translation during spermatogenesis. Displays a high basal kinase activity. Acts as a mediator of the suppressive effects of IFNgamma on hematopoiesis. Negative regulator for signals that control generation of arsenic trioxide As(2)O(3)-dependent apoptosis and anti-leukemic responses. Involved in anti-apoptotic signaling in response to serum withdrawal. The polypeptide is MAP kinase-interacting serine/threonine-protein kinase 2 (Mknk2) (Rattus norvegicus (Rat)).